The following is a 296-amino-acid chain: Formamidopyrimidine-DNA glycosylase (296 aa).

P2 serves as the catalytic Schiff-base intermediate with DNA. E3 functions as the Proton donor in the catalytic mechanism. Residue K58 is the Proton donor; for beta-elimination activity of the active site. Positions 106, 125, and 168 each coordinate DNA. An FPG-type zinc finger spans residues 259–295; sequence RVYDRVGHACPTKGCTGRIGRIVQGGRSTFFCETCQV. The Proton donor; for delta-elimination activity role is filled by R285.

This sequence belongs to the FPG family. In terms of assembly, monomer. Zn(2+) is required as a cofactor.

The catalysed reaction is Hydrolysis of DNA containing ring-opened 7-methylguanine residues, releasing 2,6-diamino-4-hydroxy-5-(N-methyl)formamidopyrimidine.. The enzyme catalyses 2'-deoxyribonucleotide-(2'-deoxyribose 5'-phosphate)-2'-deoxyribonucleotide-DNA = a 3'-end 2'-deoxyribonucleotide-(2,3-dehydro-2,3-deoxyribose 5'-phosphate)-DNA + a 5'-end 5'-phospho-2'-deoxyribonucleoside-DNA + H(+). Functionally, involved in base excision repair of DNA damaged by oxidation or by mutagenic agents. Acts as a DNA glycosylase that recognizes and removes damaged bases. Has a preference for oxidized purines, such as 7,8-dihydro-8-oxoguanine (8-oxoG). Has AP (apurinic/apyrimidinic) lyase activity and introduces nicks in the DNA strand. Cleaves the DNA backbone by beta-delta elimination to generate a single-strand break at the site of the removed base with both 3'- and 5'-phosphates. The sequence is that of Formamidopyrimidine-DNA glycosylase from Methylorubrum populi (strain ATCC BAA-705 / NCIMB 13946 / BJ001) (Methylobacterium populi).